We begin with the raw amino-acid sequence, 100 residues long: uncharacterized protein (100 aa).

The protein belongs to the ycf15 family.

It localises to the plastid. The protein resides in the chloroplast. This is an uncharacterized protein from Panax ginseng (Korean ginseng).